A 263-amino-acid chain; its full sequence is Proteasome subunit alpha type-1 (263 aa).

An N-acetylmethionine modification is found at methionine 1. Position 110 is a phosphoserine; alternate (serine 110). An O-linked (GlcNAc) serine; alternate glycan is attached at serine 110. Residue lysine 115 forms a Glycyl lysine isopeptide (Lys-Gly) (interchain with G-Cter in ubiquitin) linkage. Serine 177 carries the post-translational modification Phosphoserine. Lysine 208 is covalently cross-linked (Glycyl lysine isopeptide (Lys-Gly) (interchain with G-Cter in ubiquitin)). A disordered region spans residues 232 to 263 (FLDGLEERPQRKAQPSQAAEEPAEKADEPMEH). Residues 253–263 (PAEKADEPMEH) show a composition bias toward basic and acidic residues.

The protein belongs to the peptidase T1A family. The 26S proteasome consists of a 20S proteasome core and two 19S regulatory subunits. The 20S proteasome core is a barrel-shaped complex made of 28 subunits that are arranged in four stacked rings. The two outer rings are each formed by seven alpha subunits, and the two inner rings are formed by seven beta subunits. The proteolytic activity is exerted by three beta-subunits PSMB5, PSMB6 and PSMB7. Interacts with NOTCH3. Interacts with ZFAND1. In terms of processing, C-terminal extension is partially cleaved off by limited proteolysis leading to a conversion of the proteasome from its latent into its active form. In terms of tissue distribution, detected in liver (at protein level).

The protein localises to the cytoplasm. Its subcellular location is the nucleus. Functionally, component of the 20S core proteasome complex involved in the proteolytic degradation of most intracellular proteins. This complex plays numerous essential roles within the cell by associating with different regulatory particles. Associated with two 19S regulatory particles, forms the 26S proteasome and thus participates in the ATP-dependent degradation of ubiquitinated proteins. The 26S proteasome plays a key role in the maintenance of protein homeostasis by removing misfolded or damaged proteins that could impair cellular functions, and by removing proteins whose functions are no longer required. Associated with the PA200 or PA28, the 20S proteasome mediates ubiquitin-independent protein degradation. This type of proteolysis is required in several pathways including spermatogenesis (20S-PA200 complex) or generation of a subset of MHC class I-presented antigenic peptides (20S-PA28 complex). The polypeptide is Proteasome subunit alpha type-1 (Psma1) (Mus musculus (Mouse)).